A 460-amino-acid polypeptide reads, in one-letter code: UDP-glycosyltransferase 91C1 (460 aa).

Residues T283, 335–337, 352–360, and 374–377 contribute to the UDP-alpha-D-glucose site; these read VPQ, HCGWNSVVE, and LNEQ.

It belongs to the UDP-glycosyltransferase family.

This is UDP-glycosyltransferase 91C1 (UGT91C1) from Arabidopsis thaliana (Mouse-ear cress).